Here is a 114-residue protein sequence, read N- to C-terminus: T cell receptor beta variable 6-2 (114 aa).

The N-terminal stretch at 1 to 21 (MSLGLLCCGAFSLLWAGPVNA) is a signal peptide. In terms of domain architecture, Ig-like spans 22–114 (GVTQTPKFRV…TSVYFCASSY (93 aa)). C42 and C110 form a disulfide bridge. N84 carries N-linked (GlcNAc...) asparagine glycosylation.

Alpha-beta TR is a heterodimer composed of an alpha and beta chain; disulfide-linked. The alpha-beta TR is associated with the transmembrane signaling CD3 coreceptor proteins to form the TR-CD3 (TcR or TCR). The assembly of alpha-beta TR heterodimers with CD3 occurs in the endoplasmic reticulum where a single alpha-beta TR heterodimer associates with one CD3D-CD3E heterodimer, one CD3G-CD3E heterodimer and one CD247 homodimer forming a stable octameric structure. CD3D-CD3E and CD3G-CD3E heterodimers preferentially associate with TR alpha and TR beta chains, respectively. The association of the CD247 homodimer is the last step of TcR assembly in the endoplasmic reticulum and is required for transport to the cell surface.

Its subcellular location is the cell membrane. V region of the variable domain of T cell receptor (TR) beta chain that participates in the antigen recognition. Alpha-beta T cell receptors are antigen specific receptors which are essential to the immune response and are present on the cell surface of T lymphocytes. Recognize peptide-major histocompatibility (MH) (pMH) complexes that are displayed by antigen presenting cells (APC), a prerequisite for efficient T cell adaptive immunity against pathogens. Binding of alpha-beta TR to pMH complex initiates TR-CD3 clustering on the cell surface and intracellular activation of LCK that phosphorylates the ITAM motifs of CD3G, CD3D, CD3E and CD247 enabling the recruitment of ZAP70. In turn ZAP70 phosphorylates LAT, which recruits numerous signaling molecules to form the LAT signalosome. The LAT signalosome propagates signal branching to three major signaling pathways, the calcium, the mitogen-activated protein kinase (MAPK) kinase and the nuclear factor NF-kappa-B (NF-kB) pathways, leading to the mobilization of transcription factors that are critical for gene expression and essential for T cell growth and differentiation. The T cell repertoire is generated in the thymus, by V-(D)-J rearrangement. This repertoire is then shaped by intrathymic selection events to generate a peripheral T cell pool of self-MH restricted, non-autoaggressive T cells. Post-thymic interaction of alpha-beta TR with the pMH complexes shapes TR structural and functional avidity. The sequence is that of T cell receptor beta variable 6-2 from Homo sapiens (Human).